Here is a 635-residue protein sequence, read N- to C-terminus: Ligand-gated ion channel 4 (635 aa).

An N-terminal signal peptide occupies residues 1–24 (MIICYSCLTVSILLTIKFVPCRFA). The Extracellular portion of the chain corresponds to 25–324 (GIEHQNTKSR…IHMHRRPLFY (300 aa)). N46, N139, N177, and N225 each carry an N-linked (GlcNAc...) asparagine glycan. The cysteines at positions 238 and 252 are disulfide-linked. Residue N282 is glycosylated (N-linked (GlcNAc...) asparagine). 3 helical membrane-spanning segments follow: residues 325 to 345 (VFNH…GFLM), 355 to 375 (MIIT…ESIP), and 381 to 401 (VPLI…ATCV). At 402–599 (NVITLNMHRN…QQLASVVDRL (198 aa)) the chain is on the cytoplasmic side. A helical transmembrane segment spans residues 600–620 (LLCLFCTATLFTIICLLIVPV). The N-linked (GlcNAc...) asparagine glycan is linked to N625.

Belongs to the ligand-gated ion channel (TC 1.A.9) family.

It is found in the postsynaptic cell membrane. The protein localises to the cell membrane. In terms of biological role, possible acetylcholine receptor. The chain is Ligand-gated ion channel 4 (lgc-4) from Caenorhabditis elegans.